Here is a 439-residue protein sequence, read N- to C-terminus: uncharacterized protein (439 aa).

The region spanning 1–55 (MLEQVRIQKMVNGGYGLAHLSNGKVVLVEGAYPGEEVLIKTYREKRDFSFGKVVS) is the TRAM domain. [4Fe-4S] cluster contacts are provided by cysteine 68, cysteine 74, cysteine 77, and cysteine 149. S-adenosyl-L-methionine is bound by residues glutamine 272, tyrosine 301, glutamate 322, and aspartate 367. Catalysis depends on cysteine 394, which acts as the Nucleophile.

Belongs to the class I-like SAM-binding methyltransferase superfamily. RNA M5U methyltransferase family.

This is an uncharacterized protein from Thermotoga maritima (strain ATCC 43589 / DSM 3109 / JCM 10099 / NBRC 100826 / MSB8).